The primary structure comprises 61 residues: Large ribosomal subunit protein uL30 (61 aa).

Belongs to the universal ribosomal protein uL30 family. In terms of assembly, part of the 50S ribosomal subunit.

This chain is Large ribosomal subunit protein uL30, found in Chlorobaculum tepidum (strain ATCC 49652 / DSM 12025 / NBRC 103806 / TLS) (Chlorobium tepidum).